The following is a 251-amino-acid chain: Imidazole glycerol phosphate synthase subunit HisF (251 aa).

Residues Asp11 and Asp130 contribute to the active site.

It belongs to the HisA/HisF family. In terms of assembly, heterodimer of HisH and HisF.

Its subcellular location is the cytoplasm. It catalyses the reaction 5-[(5-phospho-1-deoxy-D-ribulos-1-ylimino)methylamino]-1-(5-phospho-beta-D-ribosyl)imidazole-4-carboxamide + L-glutamine = D-erythro-1-(imidazol-4-yl)glycerol 3-phosphate + 5-amino-1-(5-phospho-beta-D-ribosyl)imidazole-4-carboxamide + L-glutamate + H(+). Its pathway is amino-acid biosynthesis; L-histidine biosynthesis; L-histidine from 5-phospho-alpha-D-ribose 1-diphosphate: step 5/9. Its function is as follows. IGPS catalyzes the conversion of PRFAR and glutamine to IGP, AICAR and glutamate. The HisF subunit catalyzes the cyclization activity that produces IGP and AICAR from PRFAR using the ammonia provided by the HisH subunit. The polypeptide is Imidazole glycerol phosphate synthase subunit HisF (Pelagibacter ubique (strain HTCC1062)).